The following is a 511-amino-acid chain: Putative thymidine phosphorylase (511 aa).

It belongs to the thymidine/pyrimidine-nucleoside phosphorylase family. Type 2 subfamily.

It catalyses the reaction thymidine + phosphate = 2-deoxy-alpha-D-ribose 1-phosphate + thymine. This is Putative thymidine phosphorylase from Polaromonas sp. (strain JS666 / ATCC BAA-500).